The chain runs to 206 residues: dCTP deaminase, dUMP-forming (206 aa).

Residues 117 to 122 (RSSFGR), Asp135, 143 to 145 (TLE), Gln163, Tyr177, Lys184, and Gln188 each bind dCTP. The Proton donor/acceptor role is filled by Glu145.

It belongs to the dCTP deaminase family. Homotrimer.

It carries out the reaction dCTP + 2 H2O = dUMP + NH4(+) + diphosphate. It functions in the pathway pyrimidine metabolism; dUMP biosynthesis; dUMP from dCTP: step 1/1. Bifunctional enzyme that catalyzes both the deamination of dCTP to dUTP and the hydrolysis of dUTP to dUMP without releasing the toxic dUTP intermediate. The sequence is that of dCTP deaminase, dUMP-forming from Methanococcus maripaludis (strain C5 / ATCC BAA-1333).